The sequence spans 544 residues: Nucleosome assembly protein 1-like 3 (544 aa).

Disordered regions lie at residues 1–109 (MAEA…LFLD) and 168–345 (PTEE…KKED). A compositionally biased stretch (low complexity) spans 35–83 (SNSSSSTNSCSSSGSSSSGSSSSSSSSSSSSSSSSSSSSGSSGSSSNGS). A compositionally biased stretch (acidic residues) spans 168–192 (PTEEECEWNSEEEFSGDEEMQDDTP). Basic and acidic residues-rich tracts occupy residues 207-228 (CNEK…PEAK), 235-277 (PKET…KADS), and 314-332 (PARE…EGVN).

The protein belongs to the nucleosome assembly protein (NAP) family. As to expression, expressed in brain.

Its subcellular location is the nucleus. The protein localises to the cytoplasm. This Mus musculus (Mouse) protein is Nucleosome assembly protein 1-like 3 (Nap1l3).